Here is a 356-residue protein sequence, read N- to C-terminus: Branched-chain-amino-acid transaminase 1 (356 aa).

Lys-197 carries the post-translational modification N6-(pyridoxal phosphate)lysine.

It belongs to the class-IV pyridoxal-phosphate-dependent aminotransferase family. It depends on pyridoxal 5'-phosphate as a cofactor.

It catalyses the reaction L-leucine + 2-oxoglutarate = 4-methyl-2-oxopentanoate + L-glutamate. The catalysed reaction is L-isoleucine + 2-oxoglutarate = (S)-3-methyl-2-oxopentanoate + L-glutamate. The enzyme catalyses L-valine + 2-oxoglutarate = 3-methyl-2-oxobutanoate + L-glutamate. It functions in the pathway amino-acid biosynthesis; L-isoleucine biosynthesis; L-isoleucine from 2-oxobutanoate: step 4/4. Its pathway is amino-acid biosynthesis; L-leucine biosynthesis; L-leucine from 3-methyl-2-oxobutanoate: step 4/4. The protein operates within amino-acid biosynthesis; L-valine biosynthesis; L-valine from pyruvate: step 4/4. Inhibited by canaline. Its function is as follows. Transaminates branched-chain amino acids and ketoglutarate. Involved in the final step of the methionine regeneration pathway, where ketomethiobutyrate (KMTB) is converted to methionine via a transamination. The amino donor preference is isoleucine, leucine, valine, phenylalanine, and tyrosine. The protein is Branched-chain-amino-acid transaminase 1 (ilvE) of Bacillus subtilis (strain 168).